Consider the following 82-residue polypeptide: Large ribosomal subunit protein uL23 (82 aa).

The protein belongs to the universal ribosomal protein uL23 family. In terms of assembly, part of the 50S ribosomal subunit. Contacts protein L29.

In terms of biological role, binds to 23S rRNA. One of the proteins that surrounds the polypeptide exit tunnel on the outside of the ribosome. The polypeptide is Large ribosomal subunit protein uL23 (Methanosarcina mazei (strain ATCC BAA-159 / DSM 3647 / Goe1 / Go1 / JCM 11833 / OCM 88) (Methanosarcina frisia)).